The chain runs to 373 residues: GTP cyclohydrolase 1 type 2 homolog (373 aa).

A divalent metal cation-binding residues include histidine 67, histidine 68, aspartate 106, histidine 333, and glutamate 336.

This sequence belongs to the GTP cyclohydrolase I type 2/NIF3 family. In terms of assembly, homohexamer.

This is GTP cyclohydrolase 1 type 2 homolog from Listeria innocua serovar 6a (strain ATCC BAA-680 / CLIP 11262).